Consider the following 576-residue polypeptide: uncharacterized protein (576 aa).

The signal sequence occupies residues 1 to 28 (MLRLNGLRVLLRTLAAIGALLTTASASA). Ser-185 acts as the Acyl-ester intermediate in catalysis. Intrachain disulfides connect Cys-252-Cys-269 and Cys-278-Cys-286. Residues Asp-253, Asp-256, Asp-260, and Val-262 each contribute to the Ca(2+) site. Catalysis depends on charge relay system residues Asp-414 and His-464. Cysteines 529 and 551 form a disulfide.

It belongs to the tannase family.

This is an uncharacterized protein from Xanthomonas campestris pv. campestris (strain ATCC 33913 / DSM 3586 / NCPPB 528 / LMG 568 / P 25).